A 450-amino-acid polypeptide reads, in one-letter code: tRNA modification GTPase MnmE (450 aa).

3 residues coordinate (6S)-5-formyl-5,6,7,8-tetrahydrofolate: K21, E78, and K117. Residues 213–376 (GHALSIVGKP…LSQKISAFFP (164 aa)) form the TrmE-type G domain. N223 lines the K(+) pocket. Residues 223-228 (NAGKSS), 242-248 (SDIKGTT), and 267-270 (DTAG) each bind GTP. S227 contributes to the Mg(2+) binding site. K(+)-binding residues include S242, I244, and T247. Residue T248 coordinates Mg(2+). K450 lines the (6S)-5-formyl-5,6,7,8-tetrahydrofolate pocket.

Belongs to the TRAFAC class TrmE-Era-EngA-EngB-Septin-like GTPase superfamily. TrmE GTPase family. Homodimer. Heterotetramer of two MnmE and two MnmG subunits. It depends on K(+) as a cofactor.

Its subcellular location is the cytoplasm. Exhibits a very high intrinsic GTPase hydrolysis rate. Involved in the addition of a carboxymethylaminomethyl (cmnm) group at the wobble position (U34) of certain tRNAs, forming tRNA-cmnm(5)s(2)U34. This Helicobacter pylori (strain Shi470) protein is tRNA modification GTPase MnmE.